Here is a 378-residue protein sequence, read N- to C-terminus: Ferredoxin--NADP reductase, root isozyme 1, chloroplastic (378 aa).

Residues 1–65 (MALSTTPSQM…KRSTICMSLQ (65 aa)) constitute a chloroplast transit peptide. The FAD-binding FR-type domain occupies 93–221 (KEPYTATIVS…TGPSGKVMLL (129 aa)). A disulfide bond links Cys-196 and Cys-201. Ser-197 is subject to Phosphoserine. Residue Thr-229 is modified to Phosphothreonine. 231 to 249 (IMIATGTGVAPYRGYLRRM) contributes to the NADP(+) binding site. The stretch at 349-373 (LKRVAEERGESWEQKLTQLRKNKQW) forms a coiled coil.

It belongs to the ferredoxin--NADP reductase type 1 family. FAD is required as a cofactor. As to expression, expressed in shoots and roots. Less abundant in roots than RFNR2.

Its subcellular location is the plastid. The protein resides in the chloroplast. The catalysed reaction is 2 reduced [2Fe-2S]-[ferredoxin] + NADP(+) + H(+) = 2 oxidized [2Fe-2S]-[ferredoxin] + NADPH. In terms of biological role, maintains the supply of reduced ferredoxin under non-photosynthetic conditions. In Arabidopsis thaliana (Mouse-ear cress), this protein is Ferredoxin--NADP reductase, root isozyme 1, chloroplastic (RFNR1).